A 314-amino-acid chain; its full sequence is MYTRSKVVGPGLGTSSISRDHAGAGQRRELGLQQNRRQSLEVAAPEGPKMERQGHADQGSAGTYTLIAPNESRRQKIQRIAEQELADLERWKQQNRAKPVYLVPQRLGGSQSEAEVRQKQQLQQMRSKYQQKLKRDESIRIRKEAEEAKFQKMKAIQREKSNKLEEKKQLQEDIRRATFREHHQSKTAELLSRLDTERRNRSACLIAPPATQSSRWKLPVLLRDPSWAGSQAHRDSPQKEDNPRLQKTRDGHQKNKLLETKGQHQEEERAQIHQAEHWRVNNAFLDRLQGKSQPGGLEQSGGCCNMNSTDSWGL.

Disordered regions lie at residues 1–72 (MYTR…PNES), 227–272 (WAGS…RAQI), and 289–314 (QGKS…SWGL). Residues 18–30 (SRDHAGAGQRREL) are compositionally biased toward basic and acidic residues. A Phosphoserine modification is found at Ser-39. The stretch at 71 to 180 (ESRRQKIQRI…QEDIRRATFR (110 aa)) forms a coiled coil. Over residues 232 to 272 (AHRDSPQKEDNPRLQKTRDGHQKNKLLETKGQHQEEERAQI) the composition is skewed to basic and acidic residues. A compositionally biased stretch (polar residues) spans 305 to 314 (NMNSTDSWGL).

As to expression, expressed in the spleen, with expression in T cells, B cells, natural killer cells and natural killer T cells and high expression in monocytes and macrophages.

Its function is as follows. Plays a role in M1 macrophage polarization and is required for the proper regulation of gene expression during M1 versus M2 macrophage differentiation. Might play a role in RELA/p65 and STAT1 phosphorylation and nuclear localization upon activation of macrophages. This is Epithelial-stromal interaction protein 1 (Epsti1) from Mus musculus (Mouse).